A 292-amino-acid polypeptide reads, in one-letter code: Transforming growth factor-beta receptor type 3-like protein (292 aa).

A signal peptide spans 1–16 (MLGTVLLLALLPGITT). Residues 17–170 (LPSGPPAPPF…APAPLTPPPP (154 aa)) form the ZP; truncated domain. Over 17 to 244 (LPSGPPAPPF…PAPAALEPAP (228 aa)) the chain is Extracellular. An intrachain disulfide couples C85 to C147. The segment at 160-236 (RAPAPLTPPP…AVRPEPPAPA (77 aa)) is disordered. Pro residues-rich tracts occupy residues 164-175 (PLTPPPPPPPSR) and 213-222 (PRPPPRPPKS). The helical transmembrane segment at 245–265 (VVALVLAAFVLGAALAAGLGL) threads the bilayer. Residues 266–292 (VCAHSAPHAPGPPARASPSGPQPRRSQ) are Cytoplasmic-facing. Residues 273–292 (HAPGPPARASPSGPQPRRSQ) are disordered. Over residues 281–292 (ASPSGPQPRRSQ) the composition is skewed to low complexity.

In terms of processing, glycosylated. As to expression, expressed in pituitary gland gonadotrope cells.

It localises to the cell membrane. Expressed in gonadotrope cells, acts as an inhibin B coreceptor and regulates follicle-stimulating hormone (FSH) levels and female fertility. This Homo sapiens (Human) protein is Transforming growth factor-beta receptor type 3-like protein.